The following is a 189-amino-acid chain: Riboflavin transporter RibU (189 aa).

Residues M1–M9 lie on the Cytoplasmic side of the membrane. A helical membrane pass occupies residues Q10–T29. The Periplasmic segment spans residues F30–L44. Positions D45–F56 form an intramembrane region, helical. Residues T57–F58 lie on the Cytoplasmic side of the membrane. Residues G59 to S78 form a helical membrane-spanning segment. Over M79–P82 the chain is Periplasmic. The helical transmembrane segment at V83–K104 threads the bilayer. The Cytoplasmic portion of the chain corresponds to N105–R107. A helical transmembrane segment spans residues S108–Y132. Topologically, residues F133 to G159 are periplasmic. A helical membrane pass occupies residues I160–L182. At A183–I189 the chain is on the cytoplasmic side.

Belongs to the prokaryotic riboflavin transporter (P-RFT) (TC 2.A.87) family. As to quaternary structure, forms a stable energy-coupling factor (ECF) transporter complex composed of a membrane-embedded substrate-binding protein (S component), 2 ATP-binding proteins (A component) and 2 transmembrane proteins (T component). May be able to interact with more than 1 S component at a time.

The protein resides in the cell membrane. Mediates riboflavin uptake, may also transport FMN and roseoflavin. Probably a riboflavin-binding protein that interacts with the energy-coupling factor (ECF) ABC-transporter complex. Unlike classic ABC transporters this ECF transporter provides the energy necessary to transport a number of different substrates. The substrates themselves are bound by transmembrane, not extracytoplasmic soluble proteins. This chain is Riboflavin transporter RibU (ribU), found in Staphylococcus aureus (strain TCH60).